A 307-amino-acid polypeptide reads, in one-letter code: Thioredoxin reductase (307 aa).

Position 34-41 (34-41 (ESKAHGGQ)) interacts with FAD. A disulfide bridge links cysteine 134 with cysteine 137. 275–284 (DVRAKSFRQV) is an FAD binding site.

The protein belongs to the class-II pyridine nucleotide-disulfide oxidoreductase family. In terms of assembly, homodimer. Requires FAD as cofactor.

It is found in the cytoplasm. It catalyses the reaction [thioredoxin]-dithiol + NADP(+) = [thioredoxin]-disulfide + NADPH + H(+). This Treponema pallidum (strain Nichols) protein is Thioredoxin reductase (trxB).